The primary structure comprises 236 residues: MATPHINAQVGDFAETVLMPGDPLRAKFIAENFLEDVTQVCDVRNMFGYTGTYKGKKVSVMGHGMGIPSCCIYVHELIAEFGVKNIIRVGSCGAVHDDVKLMDVVIGMGASTDSKVNRIRFNNHDFAAIADFGLLETAVAQARKLNVPVKVGNVFSADLFYSPETDLFDKMEKLGILGVDMEAAGIYRVAADLGAKALTILTVSDHIKRGEKLSSEDRQKSFNDMMTVALETAIKL.

H5 provides a ligand contact to a purine D-ribonucleoside. Residues G21, R25, R44, and R88–S91 contribute to the phosphate site. Residues D180–E182 and S204–D205 each bind a purine D-ribonucleoside. Residue D205 is the Proton donor of the active site.

Belongs to the PNP/UDP phosphorylase family. As to quaternary structure, homohexamer; trimer of homodimers.

The catalysed reaction is a purine D-ribonucleoside + phosphate = a purine nucleobase + alpha-D-ribose 1-phosphate. The enzyme catalyses a purine 2'-deoxy-D-ribonucleoside + phosphate = a purine nucleobase + 2-deoxy-alpha-D-ribose 1-phosphate. In terms of biological role, catalyzes the reversible phosphorolytic breakdown of the N-glycosidic bond in the beta-(deoxy)ribonucleoside molecules, with the formation of the corresponding free purine bases and pentose-1-phosphate. This is Purine nucleoside phosphorylase DeoD-type from Aliivibrio salmonicida (strain LFI1238) (Vibrio salmonicida (strain LFI1238)).